The sequence spans 460 residues: Pyruvate dehydrogenase E1 component subunit beta (460 aa).

The Lipoyl-binding domain maps to 2-78 (PVEILMPALS…KVNTPIAVLL (77 aa)). Position 43 is an N6-lipoyllysine (K43). The interval 91–131 (KTEAPKAETPKPAAAEAPAASAAPVAAQPKADVPSDPAIPA) is disordered. Low complexity predominate over residues 100-121 (PKPAAAEAPAASAAPVAAQPKA). A thiamine diphosphate-binding site is contributed by E194.

As to quaternary structure, heterodimer of an alpha and a beta chain. (R)-lipoate is required as a cofactor. It depends on thiamine diphosphate as a cofactor.

It carries out the reaction N(6)-[(R)-lipoyl]-L-lysyl-[protein] + pyruvate + H(+) = N(6)-[(R)-S(8)-acetyldihydrolipoyl]-L-lysyl-[protein] + CO2. In terms of biological role, the pyruvate dehydrogenase complex catalyzes the overall conversion of pyruvate to acetyl-CoA and CO(2). It contains multiple copies of three enzymatic components: pyruvate dehydrogenase (E1), dihydrolipoamide acetyltransferase (E2) and lipoamide dehydrogenase (E3). The chain is Pyruvate dehydrogenase E1 component subunit beta (pdhB) from Rhizobium meliloti (strain 1021) (Ensifer meliloti).